The sequence spans 165 residues: Lipoprotein signal peptidase (165 aa).

Transmembrane regions (helical) follow at residues phenylalanine 7–isoleucine 27, threonine 28–valine 48, phenylalanine 61–tryptophan 81, and aspartate 87–isoleucine 107. Active-site residues include aspartate 117 and aspartate 136. Residues serine 128 to isoleucine 148 form a helical membrane-spanning segment.

The protein belongs to the peptidase A8 family.

The protein localises to the cell inner membrane. The enzyme catalyses Release of signal peptides from bacterial membrane prolipoproteins. Hydrolyzes -Xaa-Yaa-Zaa-|-(S,diacylglyceryl)Cys-, in which Xaa is hydrophobic (preferably Leu), and Yaa (Ala or Ser) and Zaa (Gly or Ala) have small, neutral side chains.. The protein operates within protein modification; lipoprotein biosynthesis (signal peptide cleavage). This protein specifically catalyzes the removal of signal peptides from prolipoproteins. The polypeptide is Lipoprotein signal peptidase (Bartonella bacilliformis (strain ATCC 35685 / KC583 / Herrer 020/F12,63)).